Here is an 887-residue protein sequence, read N- to C-terminus: Alanine--tRNA ligase (887 aa).

The Zn(2+) site is built by H581, H585, C683, and H687.

It belongs to the class-II aminoacyl-tRNA synthetase family. Requires Zn(2+) as cofactor.

It localises to the cytoplasm. The catalysed reaction is tRNA(Ala) + L-alanine + ATP = L-alanyl-tRNA(Ala) + AMP + diphosphate. In terms of biological role, catalyzes the attachment of alanine to tRNA(Ala) in a two-step reaction: alanine is first activated by ATP to form Ala-AMP and then transferred to the acceptor end of tRNA(Ala). Also edits incorrectly charged Ser-tRNA(Ala) and Gly-tRNA(Ala) via its editing domain. The protein is Alanine--tRNA ligase of Ehrlichia chaffeensis (strain ATCC CRL-10679 / Arkansas).